Reading from the N-terminus, the 432-residue chain is Enolase (432 aa).

Residue Q167 participates in (2R)-2-phosphoglycerate binding. E209 acts as the Proton donor in catalysis. Residues D246, E289, and D316 each contribute to the Mg(2+) site. (2R)-2-phosphoglycerate is bound by residues K341, R370, S371, and K392. The active-site Proton acceptor is the K341.

The protein belongs to the enolase family. It depends on Mg(2+) as a cofactor.

Its subcellular location is the cytoplasm. It is found in the secreted. The protein resides in the cell surface. The catalysed reaction is (2R)-2-phosphoglycerate = phosphoenolpyruvate + H2O. The protein operates within carbohydrate degradation; glycolysis; pyruvate from D-glyceraldehyde 3-phosphate: step 4/5. Its function is as follows. Catalyzes the reversible conversion of 2-phosphoglycerate (2-PG) into phosphoenolpyruvate (PEP). It is essential for the degradation of carbohydrates via glycolysis. This chain is Enolase, found in Thermotoga neapolitana (strain ATCC 49049 / DSM 4359 / NBRC 107923 / NS-E).